A 33-amino-acid chain; its full sequence is Phospholipase A2 homolog BmarPLA2 (33 aa).

It belongs to the phospholipase A2 family. Group II subfamily. K49 sub-subfamily. Homodimer; non-covalently linked. In terms of tissue distribution, expressed by the venom gland.

The protein resides in the secreted. Its function is as follows. Snake phospholipase A2 homolog that lacks enzymatic activity. May display myotoxin activity. In isolated heart decreases cardiac frequency. Also decreases mean arterial pressure. Does not show antimicrobial activity. Does not change renal parameters (such as perfusion pressure, renal vascular resistance, urinary flow, glomerular filtration rate and sodium tubular transport). The sequence is that of Phospholipase A2 homolog BmarPLA2 from Bothrops marajoensis (Marajo lancehead).